Here is a 53-residue protein sequence, read N- to C-terminus: MMDDLQDVSRLREAYQFYQKAKQDEDSIVCGCLNDAYEWLFSELKALFDEEEE.

This is an uncharacterized protein from Haemophilus influenzae (strain ATCC 51907 / DSM 11121 / KW20 / Rd).